A 473-amino-acid polypeptide reads, in one-letter code: MSLHYLPAIIISIAILVLLLVIALKRNHQLAFYITGTGLCIACVSQCSLLSASHFSDELFTFSSMSGVLSVLLLGILIFLWLQLHTWLEKHEANHKEEFYLLLLLASLGALGMIVSEHFASFFLTLELMSLSFVGLIAYSHSQLSSQEAGVKYLILSAVASAFMLMGIAIVYLQTGNLSFQYLADNVNNTNPSSMLFTAGLIFILIGLLFKLSLVPCHLWVADIFEGAPLPTTALLSTVSKLASFVVLWKLFHLGNWQENQIVLTLIGVVAVASMLIGNLLALLQNSILRILAFSSISHFGYLLILLFLFNHNADLLDNPTFPLEALLFYLSAYLITLTGAFSILMKLEGGKSLEALTGLFWSKPLHAASLSIVMLSLAGIPLTLGFMGKFYLVTASVSYQVTWPLPFLVIASVIGLFFYLRVIMVMLSATQSPHSSPSTSGEVASLWFIILLIMGLGTFPALFADTIKSVVG.

14 helical membrane passes run 3–23 (LHYL…LVIA), 30–50 (LAFY…CSLL), 62–82 (FSSM…FLWL), 99–119 (FYLL…SEHF), 120–140 (ASFF…IAYS), 153–173 (YLIL…IVYL), 195–215 (MLFT…LSLV), 230–252 (LPTT…WKLF), 262–282 (IVLT…NLLA), 291–311 (ILAF…FLFN), 326–346 (ALLF…SILM), 368–388 (AASL…LGFM), 408–428 (FLVI…MVML), and 444–464 (VASL…PALF).

It belongs to the complex I subunit 2 family. NDH-1 is composed of 13 different subunits. Subunits NuoA, H, J, K, L, M, N constitute the membrane sector of the complex.

The protein resides in the cell inner membrane. It carries out the reaction a quinone + NADH + 5 H(+)(in) = a quinol + NAD(+) + 4 H(+)(out). Functionally, NDH-1 shuttles electrons from NADH, via FMN and iron-sulfur (Fe-S) centers, to quinones in the respiratory chain. The immediate electron acceptor for the enzyme in this species is believed to be ubiquinone. Couples the redox reaction to proton translocation (for every two electrons transferred, four hydrogen ions are translocated across the cytoplasmic membrane), and thus conserves the redox energy in a proton gradient. The polypeptide is NADH-quinone oxidoreductase subunit N (Shewanella woodyi (strain ATCC 51908 / MS32)).